A 291-amino-acid polypeptide reads, in one-letter code: Tyrosine isonitrile desaturase (291 aa).

Residues H110, D112, and H259 each coordinate Fe cation.

The protein belongs to the TfdA dioxygenase family. In terms of assembly, homotrimer in solution. Requires Fe(2+) as cofactor.

It carries out the reaction (2S)-3-(4-hydroxyphenyl)-2-isocyanopropanoate + 2-oxoglutarate + O2 = (2E)-3-(4-hydroxyphenyl)-2-isocyanoprop-2-enoate + succinate + CO2 + H2O. Involved in the biosynthesis of paerucumarin, a cyclized isocyano derivative of tyrosine. Catalyzes the 2-oxoglutarate-dependent oxidation of tyrosine isonitrile. The polypeptide is Tyrosine isonitrile desaturase (Pseudomonas aeruginosa (strain ATCC 15692 / DSM 22644 / CIP 104116 / JCM 14847 / LMG 12228 / 1C / PRS 101 / PAO1)).